Here is a 696-residue protein sequence, read N- to C-terminus: Elongation factor G (696 aa).

One can recognise a tr-type G domain in the interval 8–286; that stretch reads EDVRNIGIAA…AVVAYLPAPT (279 aa). GTP contacts are provided by residues 17-24, 81-85, and 135-138; these read AHIDAGKT, DTPGH, and NKMD.

Belongs to the TRAFAC class translation factor GTPase superfamily. Classic translation factor GTPase family. EF-G/EF-2 subfamily.

It localises to the cytoplasm. Catalyzes the GTP-dependent ribosomal translocation step during translation elongation. During this step, the ribosome changes from the pre-translocational (PRE) to the post-translocational (POST) state as the newly formed A-site-bound peptidyl-tRNA and P-site-bound deacylated tRNA move to the P and E sites, respectively. Catalyzes the coordinated movement of the two tRNA molecules, the mRNA and conformational changes in the ribosome. This is Elongation factor G from Sulfurimonas denitrificans (strain ATCC 33889 / DSM 1251) (Thiomicrospira denitrificans (strain ATCC 33889 / DSM 1251)).